Here is a 254-residue protein sequence, read N- to C-terminus: Adenosylcobinamide-GDP ribazoletransferase (254 aa).

The next 7 membrane-spanning stretches (helical) occupy residues 29–49, 50–70, 98–118, 121–141, 170–190, 198–218, and 230–250; these read LFWF…LGYF, TSLL…GIAL, IMKD…MMLL, IAIL…GVLL, AGVV…FPLL, LYAV…TGLL, and VLGA…ALSA.

This sequence belongs to the CobS family. The cofactor is Mg(2+).

It is found in the cell inner membrane. The catalysed reaction is alpha-ribazole + adenosylcob(III)inamide-GDP = adenosylcob(III)alamin + GMP + H(+). It catalyses the reaction alpha-ribazole 5'-phosphate + adenosylcob(III)inamide-GDP = adenosylcob(III)alamin 5'-phosphate + GMP + H(+). Its pathway is cofactor biosynthesis; adenosylcobalamin biosynthesis; adenosylcobalamin from cob(II)yrinate a,c-diamide: step 7/7. Its function is as follows. Joins adenosylcobinamide-GDP and alpha-ribazole to generate adenosylcobalamin (Ado-cobalamin). Also synthesizes adenosylcobalamin 5'-phosphate from adenosylcobinamide-GDP and alpha-ribazole 5'-phosphate. In Pelodictyon phaeoclathratiforme (strain DSM 5477 / BU-1), this protein is Adenosylcobinamide-GDP ribazoletransferase.